A 1238-amino-acid chain; its full sequence is Cullin-associated NEDD8-dissociated protein 1 (1238 aa).

HEAT repeat units follow at residues 41 to 78 (TYENKIVTKLLALTADSANNVQENVVKCLGLLIKRVKD), 126 to 167 (LVIK…KYGS), 171 to 208 (GDLENIQKVVLPKLNATRPAIRKRAILCLANIAFPSPD), 210 to 247 (LFNSLLDYIIKSIEEAKKPDHISTLIQAIGAICKSSGY), and 251 to 292 (KYLP…KCQK). Positions 315 to 354 (YSDDGEGEEDGDEEEEEMETSGDNDEEQEEEEEEEDLSDD) are disordered. 9 HEAT repeats span residues 382-419 (ELYQKVAPVLYNRFKEREENVRLDIFTTFVLLLKQLNK), 432-469 (QQVPKLVQSISKSLIDKSIRTRVGAIALLKELVMIIPG), 603-641 (EIQSELQPCLSILLERLDNELTRVVTVKVLSRIINSSIN), 646-683 (SILPSAIKLLSTFLRKNNRVLKQSSLIALNDIVKVCPN), 688-725 (SLLTGILTEMATLINESDLQITHLAFVFIQNLLKNYSE), 853-890 (HENENLQESVYKTFEANNEEIKQVAALCLGDIAVCSLQ), 933-966 (PFLQSILPLLFDNCVNEEEGTRNIVAECLGKLSM), 967-1004 (IEPNEIIPKLVEKIKSPSPLERSTIVTSIKFSIMENKE), and 1008-1045 (QYLAPNISQFLSLLHDGDLIVRRSALLSLNYIAHNKPN).

This sequence belongs to the CAND family.

It localises to the nucleus. Functionally, key assembly factor of SCF (SKP1-CUL1-F-box protein) E3 ubiquitin ligase complexes that promotes the exchange of the substrate-recognition F-box subunit in SCF complexes, thereby playing a key role in the cellular repertoire of SCF complexes. Acts as a F-box protein exchange factor. The protein is Cullin-associated NEDD8-dissociated protein 1 (cand1) of Dictyostelium discoideum (Social amoeba).